We begin with the raw amino-acid sequence, 544 residues long: ATP synthase subunit alpha (544 aa).

Position 173–180 (173–180 (GDRQTGKT)) interacts with ATP. The tract at residues 513-544 (GSDGQIIGGGEPESDGEDVDVEQEQIVRQKRG) is disordered. Residues 524-535 (PESDGEDVDVEQ) show a composition bias toward acidic residues.

The protein belongs to the ATPase alpha/beta chains family. In terms of assembly, F-type ATPases have 2 components, CF(1) - the catalytic core - and CF(0) - the membrane proton channel. CF(1) has five subunits: alpha(3), beta(3), gamma(1), delta(1), epsilon(1). CF(0) has three main subunits: a(1), b(2) and c(9-12). The alpha and beta chains form an alternating ring which encloses part of the gamma chain. CF(1) is attached to CF(0) by a central stalk formed by the gamma and epsilon chains, while a peripheral stalk is formed by the delta and b chains.

Its subcellular location is the cell membrane. It carries out the reaction ATP + H2O + 4 H(+)(in) = ADP + phosphate + 5 H(+)(out). Produces ATP from ADP in the presence of a proton gradient across the membrane. The alpha chain is a regulatory subunit. The polypeptide is ATP synthase subunit alpha (Beutenbergia cavernae (strain ATCC BAA-8 / DSM 12333 / CCUG 43141 / JCM 11478 / NBRC 16432 / NCIMB 13614 / HKI 0122)).